Here is a 308-residue protein sequence, read N- to C-terminus: Cytochrome c biogenesis protein CcsA (308 aa).

Transmembrane regions (helical) follow at residues I2–I22, G44–G64, L71–F91, M143–I163, V212–N232, W247–L267, and A273–V293.

Belongs to the CcmF/CycK/Ccl1/NrfE/CcsA family. In terms of assembly, may interact with Ccs1.

It is found in the plastid membrane. Functionally, required during biogenesis of c-type cytochromes (cytochrome c6 and cytochrome f) at the step of heme attachment. This chain is Cytochrome c biogenesis protein CcsA, found in Cuscuta reflexa (Southern Asian dodder).